An 854-amino-acid polypeptide reads, in one-letter code: Probable disease resistance protein At1g51480 (854 aa).

Residues 25–62 (RNYIHKMEANLDDLHTTMEELKNGRDDLLRRVSIEEDK) adopt a coiled-coil conformation. Residues 138 to 441 (AHKIPVPKVE…CEGYINPNRY (304 aa)) enclose the NB-ARC domain. 180 to 187 (GMGGVGKT) provides a ligand contact to ATP. LRR repeat units lie at residues 514–535 (IVRQ…SKCS), 536–557 (NLST…FFLF), 560–582 (KLVV…ISNL), 584–605 (SLQY…MKKL), 607–629 (KLIY…SATL), and 631–652 (NLQV…MEEL).

This sequence belongs to the disease resistance NB-LRR family.

Its function is as follows. Probable disease resistance protein. In Arabidopsis thaliana (Mouse-ear cress), this protein is Probable disease resistance protein At1g51480.